The primary structure comprises 1770 residues: U3 small nucleolar RNA-associated protein 10 (1770 aa).

The next 2 membrane-spanning stretches (helical) occupy residues 499–519 and 528–548; these read ILGL…FLSS and LTFL…RLLA. Residues 1730 to 1768 form an HEAT repeat; sequence MVPIIAELLEDDNEEVESEVRGGLVRVMENVLGEPFDRY.

Belongs to the HEATR1/UTP10 family. As to quaternary structure, component of the ribosomal small subunit (SSU) processome.

Its subcellular location is the nucleus. The protein localises to the nucleolus. The protein resides in the membrane. Functionally, involved in nucleolar processing of pre-18S ribosomal RNA. Involved in ribosome biosynthesis. This is U3 small nucleolar RNA-associated protein 10 from Candida glabrata (strain ATCC 2001 / BCRC 20586 / JCM 3761 / NBRC 0622 / NRRL Y-65 / CBS 138) (Yeast).